A 281-amino-acid polypeptide reads, in one-letter code: Pantothenate synthetase (281 aa).

ATP is bound at residue 30 to 37 (MGALHRGH). His-37 (proton donor) is an active-site residue. Gln-61 provides a ligand contact to (R)-pantoate. Gln-61 contributes to the beta-alanine binding site. 147-150 (GEKD) is a binding site for ATP. Residue Gln-153 participates in (R)-pantoate binding. Residues Ile-176 and 184-187 (LSSR) each bind ATP.

The protein belongs to the pantothenate synthetase family. As to quaternary structure, homodimer.

It is found in the cytoplasm. It catalyses the reaction (R)-pantoate + beta-alanine + ATP = (R)-pantothenate + AMP + diphosphate + H(+). The protein operates within cofactor biosynthesis; (R)-pantothenate biosynthesis; (R)-pantothenate from (R)-pantoate and beta-alanine: step 1/1. Functionally, catalyzes the condensation of pantoate with beta-alanine in an ATP-dependent reaction via a pantoyl-adenylate intermediate. The sequence is that of Pantothenate synthetase from Porphyromonas gingivalis (strain ATCC BAA-308 / W83).